The following is a 148-amino-acid chain: NTR domain-containing protein (148 aa).

Positions 1–26 are cleaved as a signal peptide; sequence MVCRFSYVQVVLILVVLSVIISWANA. 3 cysteine pairs are disulfide-bonded: Cys27–Cys96, Cys29–Cys122, and Cys40–Cys146. The region spanning 27–146 is the NTR domain; that stretch reads CSCFPPDETR…LQLFNDPQWC (120 aa).

As to expression, prismatic layer of shell (at protein level). Expressed primarily in the mantle with highest level in the mantle edge and lower level in the mantle pallium.

Its subcellular location is the secreted. This is NTR domain-containing protein from Margaritifera margaritifera (Freshwater pearl mussel).